The following is a 275-amino-acid chain: Ceramide synthase (275 aa).

The TLC domain occupies 34–261 (ADAVIVSARL…ICRGACRLFR (228 aa)). Transmembrane regions (helical) follow at residues 130 to 150 (FLMV…SVVW), 159 to 179 (LGCM…KILI), 194 to 214 (ALML…LYWA), and 232 to 252 (AHVN…FFLI).

In terms of tissue distribution, each isoform has a distinct expression pattern. Isoform 1 is highly expressed in brain. Isoform 2 is expressed at low levels, if any, in all analyzed tissues, with slightly higher levels in testis. Isoform 3 is expressed at very high levels in testis and, at lower levels, in white adipose tissue. In epididymal fat, isoform 3 is expressed at higher levels in obese mice compared with lean mice. By contrast, isoform 1 and 2 levels are significantly lower in obese mice compared with lean mice.

The protein resides in the golgi apparatus membrane. It is found in the endoplasmic reticulum membrane. The catalysed reaction is sphing-4-enine + octadecanoyl-CoA = N-octadecanoylsphing-4-enine + CoA + H(+). The enzyme catalyses eicosanoyl-CoA + sphing-4-enine = N-eicosanoyl-sphing-4-enine + CoA + H(+). It catalyses the reaction sphing-4-enine + hexadecanoyl-CoA = N-hexadecanoylsphing-4-enine + CoA + H(+). Its function is as follows. Involved in ceramide synthesis. In vitro, isoform 3 stimulates the production of C16-, C18- and C20-ceramides, isoform 1 slightly increases the levels of C18- and C20-ceramides, while isoform 2 exhibits only minimal activity. May interfere with adipogenesis by stimulating ceramide synthesis. This Mus musculus (Mouse) protein is Ceramide synthase (Tlcd3b).